The sequence spans 227 residues: 2,3-bisphosphoglycerate-dependent phosphoglycerate mutase (227 aa).

Residues 7 to 14 (RHGFSEWN), 20 to 21 (TG), R59, 86 to 89 (ERHY), K97, 113 to 114 (RR), and 182 to 183 (GN) contribute to the substrate site. H8 acts as the Tele-phosphohistidine intermediate in catalysis. E86 serves as the catalytic Proton donor/acceptor.

The protein belongs to the phosphoglycerate mutase family. BPG-dependent PGAM subfamily. Homodimer.

The enzyme catalyses (2R)-2-phosphoglycerate = (2R)-3-phosphoglycerate. It functions in the pathway carbohydrate degradation; glycolysis; pyruvate from D-glyceraldehyde 3-phosphate: step 3/5. Functionally, catalyzes the interconversion of 2-phosphoglycerate and 3-phosphoglycerate. The chain is 2,3-bisphosphoglycerate-dependent phosphoglycerate mutase from Haemophilus ducreyi (strain 35000HP / ATCC 700724).